The primary structure comprises 185 residues: Calcium-binding protein CML37 (185 aa).

Residues 1–12 (MTLAKNQKSSLS) show a composition bias toward polar residues. Residues 1–45 (MTLAKNQKSSLSRLYKKVSSKRSESSRNLEDESRTSSNSSGSSSL) are disordered. Basic and acidic residues predominate over residues 21-34 (KRSESSRNLEDESR). Low complexity predominate over residues 35–44 (TSSNSSGSSS). 4 EF-hand domains span residues 45–80 (LNVNELRTVFDYMDANSDGKISGEELQSCVSLLGGA), 81–116 (LSSREVEEVVKTSDVDGDGFIDFEEFLKLMEGEDGS), 119–154 (ERRKELKEAFGMYVMEGEEFITAASLRRTLSRLGES), and 155–185 (CTVDACKVMIRGFDQNDDGVLSFDEFVLMMR). Ca(2+) is bound by residues Asp58, Asn60, Asp62, Lys64, Glu69, Asp94, Asp96, Asp98, and Glu105. Residues Asp168, Asn170, Asp172, and Glu179 each coordinate Ca(2+).

As to quaternary structure, binds to ABCG36. Expressed in cotyledons, stipule, young leaves and at the hypocotyl-root junction. In mature root, expressed in the stele, cortex, emerging lateral root, root tip and root cap. In mature plant, expressed at the base of cauline and floral branches, and in rosette and cauline leaves. Expressed from stage 9 to 14 of flower development in anthers. At stage 15, expressed in carpel, sepals, petals and pollen until dehiscence. Expressed in developing seeds and young siliques.

Functionally, potential calcium sensor that binds calcium in vitro. The sequence is that of Calcium-binding protein CML37 from Arabidopsis thaliana (Mouse-ear cress).